We begin with the raw amino-acid sequence, 393 residues long: NAD(P)H-quinone oxidoreductase subunit H, chloroplastic (393 aa).

The protein belongs to the complex I 49 kDa subunit family. In terms of assembly, NDH is composed of at least 16 different subunits, 5 of which are encoded in the nucleus.

The protein localises to the plastid. It localises to the chloroplast thylakoid membrane. It carries out the reaction a plastoquinone + NADH + (n+1) H(+)(in) = a plastoquinol + NAD(+) + n H(+)(out). The catalysed reaction is a plastoquinone + NADPH + (n+1) H(+)(in) = a plastoquinol + NADP(+) + n H(+)(out). In terms of biological role, NDH shuttles electrons from NAD(P)H:plastoquinone, via FMN and iron-sulfur (Fe-S) centers, to quinones in the photosynthetic chain and possibly in a chloroplast respiratory chain. The immediate electron acceptor for the enzyme in this species is believed to be plastoquinone. Couples the redox reaction to proton translocation, and thus conserves the redox energy in a proton gradient. This chain is NAD(P)H-quinone oxidoreductase subunit H, chloroplastic, found in Brachypodium distachyon (Purple false brome).